Consider the following 181-residue polypeptide: Isopentenyl-diphosphate Delta-isomerase (181 aa).

Mn(2+) contacts are provided by histidine 24 and histidine 30. The Nudix hydrolase domain maps to 28 to 168 (LLHLAFSVLL…PDTFSVWFPT (141 aa)). The active site involves cysteine 68. Residue cysteine 68 coordinates Mg(2+). Histidine 70 is a Mn(2+) binding site. Residue glutamate 88 participates in Mg(2+) binding. Mn(2+)-binding residues include glutamate 117 and glutamate 119. Glutamate 119 is an active-site residue.

This sequence belongs to the IPP isomerase type 1 family. Mg(2+) serves as cofactor. Mn(2+) is required as a cofactor.

It localises to the cytoplasm. The catalysed reaction is isopentenyl diphosphate = dimethylallyl diphosphate. It functions in the pathway isoprenoid biosynthesis; dimethylallyl diphosphate biosynthesis; dimethylallyl diphosphate from isopentenyl diphosphate: step 1/1. In terms of biological role, catalyzes the 1,3-allylic rearrangement of the homoallylic substrate isopentenyl (IPP) to its highly electrophilic allylic isomer, dimethylallyl diphosphate (DMAPP). This is Isopentenyl-diphosphate Delta-isomerase from Aliivibrio fischeri (strain ATCC 700601 / ES114) (Vibrio fischeri).